The sequence spans 196 residues: Regulator of G-protein signaling 8 (196 aa).

The residue at position 26 (serine 26) is a Phosphoserine. Residues 72-188 enclose the RGS domain; sequence SFDVLLSHKY…LRSKMYLDLL (117 aa).

Interacts with GNAO1 and GNAI3.

Its subcellular location is the cell membrane. The protein localises to the membrane. It localises to the perikaryon. It is found in the cell projection. The protein resides in the dendrite. Its subcellular location is the nucleus. Regulates G protein-coupled receptor signaling cascades, including signaling via muscarinic acetylcholine receptor CHRM2 and dopamine receptor DRD2. Inhibits signal transduction by increasing the GTPase activity of G protein alpha subunits, thereby driving them into their inactive GDP-bound form. Modulates the activity of potassium channels that are activated in response to DRD2 and CHRM2 signaling. The protein is Regulator of G-protein signaling 8 (RGS8) of Macaca fascicularis (Crab-eating macaque).